Consider the following 235-residue polypeptide: Phosphoribosylaminoimidazole-succinocarboxamide synthase (235 aa).

The protein belongs to the SAICAR synthetase family.

The enzyme catalyses 5-amino-1-(5-phospho-D-ribosyl)imidazole-4-carboxylate + L-aspartate + ATP = (2S)-2-[5-amino-1-(5-phospho-beta-D-ribosyl)imidazole-4-carboxamido]succinate + ADP + phosphate + 2 H(+). It functions in the pathway purine metabolism; IMP biosynthesis via de novo pathway; 5-amino-1-(5-phospho-D-ribosyl)imidazole-4-carboxamide from 5-amino-1-(5-phospho-D-ribosyl)imidazole-4-carboxylate: step 1/2. This Sulfolobus acidocaldarius (strain ATCC 33909 / DSM 639 / JCM 8929 / NBRC 15157 / NCIMB 11770) protein is Phosphoribosylaminoimidazole-succinocarboxamide synthase.